A 271-amino-acid chain; its full sequence is MVATVVNVQVKNEEKIETAPKKVVFDTKNLNLWYGEDHALKDINLSIHENEVTAIIGPSGCGKSTYLKTLNRMVELVPIVRTTGVIEYRERNIFDKSYPVEELRTHVGMVFQKPNPFPKSIYENVAYGPKIHGISDKKTLDEIVEKSLRGAAIWDELKDRLHDNAYGLSGGQQQRLCIARCLAIEPDVILMDEPTSALDPISTLKVEELIQELKKDFSIVIVTHNMQQAARISDKTAFFLSGEVVEYTDTNKLFTTPSDKRTEDYITGRFG.

Residues 25–266 (FDTKNLNLWY…PSDKRTEDYI (242 aa)) enclose the ABC transporter domain. Residue 57-64 (GPSGCGKS) participates in ATP binding.

Belongs to the ABC transporter superfamily. Phosphate importer (TC 3.A.1.7) family. The complex is composed of two ATP-binding proteins (PstB), two transmembrane proteins (PstC and PstA) and a solute-binding protein (PstS).

It is found in the cell membrane. The catalysed reaction is phosphate(out) + ATP + H2O = ADP + 2 phosphate(in) + H(+). Functionally, part of the ABC transporter complex PstSACB involved in phosphate import. Responsible for energy coupling to the transport system. The protein is Phosphate import ATP-binding protein PstB of Bacillus anthracis.